Reading from the N-terminus, the 375-residue chain is Probable cytochrome c oxidase subunit 2 (375 aa).

Transmembrane regions (helical) follow at residues 36-56 (LAVS…DNVW), 80-100 (IIAA…TVVF), and 122-142 (LTYT…TVVV). Cu cation-binding residues include His264, Cys305, Cys309, and His313. The segment covering 353 to 363 (VATSTRPFNTD) has biased composition (polar residues). The disordered stretch occupies residues 353–375 (VATSTRPFNTDRTVKSAAAPEAE).

It belongs to the cytochrome c oxidase subunit 2 family. Cu cation is required as a cofactor. It depends on heme as a cofactor.

The protein localises to the cell membrane. It catalyses the reaction 4 Fe(II)-[cytochrome c] + O2 + 8 H(+)(in) = 4 Fe(III)-[cytochrome c] + 2 H2O + 4 H(+)(out). Its function is as follows. Subunits I and II form the functional core of the enzyme complex. Electrons originating in cytochrome c are transferred via heme a and Cu(A) to the binuclear center formed by heme a3 and Cu(B). This Nocardia farcinica (strain IFM 10152) protein is Probable cytochrome c oxidase subunit 2 (ctaC).